The sequence spans 124 residues: uncharacterized protein (124 aa).

A helical transmembrane segment spans residues 13–33 (IIFMALYFVITGIVIRLIGYS).

Its subcellular location is the membrane. This is an uncharacterized protein from Bacillus anthracis.